An 85-amino-acid chain; its full sequence is Large ribosomal subunit protein bL27 (85 aa).

The disordered stretch occupies residues 1–20; that stretch reads MAHKKAGGSTRNGRDSESKR.

The protein belongs to the bacterial ribosomal protein bL27 family.

The polypeptide is Large ribosomal subunit protein bL27 (Yersinia enterocolitica serotype O:8 / biotype 1B (strain NCTC 13174 / 8081)).